A 544-amino-acid chain; its full sequence is Elongator complex protein 3 (544 aa).

The 291-residue stretch at 79-369 (RTASGIAVVA…YRIQRDIPMP (291 aa)) folds into the Radical SAM core domain. [4Fe-4S] cluster contacts are provided by Cys-96, Cys-106, and Cys-109. Acetyl-CoA-binding positions include Lys-161, 472–475 (ELHV), 495–497 (FGT), and Tyr-528. An N-acetyltransferase domain is found at 393-544 (TKCRDIRARE…LDGPYMSKWL (152 aa)).

The protein belongs to the ELP3 family. Component of the elongator complex. [4Fe-4S] cluster serves as cofactor.

Its subcellular location is the cytoplasm. The enzyme catalyses uridine(34) in tRNA + acetyl-CoA + S-adenosyl-L-methionine + H2O = 5-(carboxymethyl)uridine(34) in tRNA + 5'-deoxyadenosine + L-methionine + CoA + 2 H(+). It functions in the pathway tRNA modification; 5-methoxycarbonylmethyl-2-thiouridine-tRNA biosynthesis. In terms of biological role, catalytic tRNA acetyltransferase subunit of the elongator complex which is required for multiple tRNA modifications, including mcm5U (5-methoxycarbonylmethyl uridine), mcm5s2U (5-methoxycarbonylmethyl-2-thiouridine), and ncm5U (5-carbamoylmethyl uridine). In the elongator complex, acts as a tRNA uridine(34) acetyltransferase, which mediates formation of carboxymethyluridine in the wobble base at position 34 in tRNAs. This is Elongator complex protein 3 from Schizosaccharomyces pombe (strain 972 / ATCC 24843) (Fission yeast).